Reading from the N-terminus, the 146-residue chain is Flagellar assembly factor FliW (146 aa).

Belongs to the FliW family. As to quaternary structure, interacts with translational regulator CsrA and flagellin(s).

Its subcellular location is the cytoplasm. Its function is as follows. Acts as an anti-CsrA protein, binds CsrA and prevents it from repressing translation of its target genes, one of which is flagellin. Binds to flagellin and participates in the assembly of the flagellum. In Azoarcus sp. (strain BH72), this protein is Flagellar assembly factor FliW.